We begin with the raw amino-acid sequence, 601 residues long: Glutamine--fructose-6-phosphate aminotransferase [isomerizing] (601 aa).

Residue Cys-2 is the Nucleophile; for GATase activity of the active site. Positions Cys-2–Asp-218 constitute a Glutamine amidotransferase type-2 domain. SIS domains lie at Ile-284 to Arg-423 and Ile-453 to Pro-591. Lys-596 serves as the catalytic For Fru-6P isomerization activity.

In terms of assembly, homodimer.

The protein localises to the cytoplasm. The catalysed reaction is D-fructose 6-phosphate + L-glutamine = D-glucosamine 6-phosphate + L-glutamate. Catalyzes the first step in hexosamine metabolism, converting fructose-6P into glucosamine-6P using glutamine as a nitrogen source. The chain is Glutamine--fructose-6-phosphate aminotransferase [isomerizing] from Staphylococcus aureus (strain Mu50 / ATCC 700699).